The primary structure comprises 150 residues: Large ribosomal subunit protein bL9 (150 aa).

The protein belongs to the bacterial ribosomal protein bL9 family.

In terms of biological role, binds to the 23S rRNA. The protein is Large ribosomal subunit protein bL9 of Neisseria meningitidis serogroup A / serotype 4A (strain DSM 15465 / Z2491).